Reading from the N-terminus, the 424-residue chain is PtdIns3K complex I subunit atg38 (424 aa).

Residues 50–78 (LIKRCANNQIEELMVRIRELRESLPNKQT) are a coiled coil. The segment at 73–212 (LPNKQTPISM…DPAYQNTNEQ (140 aa)) is required for interaction with atg8. Residues 178–181 (FLIV) carry the AIM motif. The segment covering 268-284 (LSEEEMGRSHKREESFK) has biased composition (basic and acidic residues). A disordered region spans residues 268–299 (LSEEEMGRSHKREESFKRAFGHASSSESSIGE). Positions 390–420 (TVDSQLKIKQLETQIATLQKQLEQFQTSTLD) form a coiled coil.

This sequence belongs to the ATG38 family. Component of the autophagy-specific vps34 PI3-kinase complex I composed of vps15, atg6, pik3/vps34, atg14 and atg38. Interacts (via AIM motif) with atg8; the interaction is direct and leads to recruitment of the autophagy-specific vps34 PI3-kinase complex I to the phagophore assembly site.

Its subcellular location is the preautophagosomal structure membrane. The protein resides in the cytoplasm. The protein localises to the cytosol. Functions as a part of the autophagy-specific VPS34 PI3-kinase complex I that plays a role in autophagosome assembly. This complex is essential to recruit the atg8-phosphatidylinositol conjugate and the atg12-atg5 conjugate to the pre-autophagosomal structure. By binding to atg8 at the phagophore assembly site, atg38 helps establish a positive feedback loop for recruitment of phagophore assembly proteins, including atg8. This is PtdIns3K complex I subunit atg38 from Schizosaccharomyces pombe (strain 972 / ATCC 24843) (Fission yeast).